An 86-amino-acid polypeptide reads, in one-letter code: Small ribosomal subunit protein uS15c (86 aa).

This sequence belongs to the universal ribosomal protein uS15 family. In terms of assembly, part of the 30S ribosomal subunit.

It localises to the plastid. The chain is Small ribosomal subunit protein uS15c (rps15) from Cuscuta obtusiflora (Peruvian dodder).